A 311-amino-acid polypeptide reads, in one-letter code: L-lactate dehydrogenase 2 (311 aa).

Residues valine 14, aspartate 35, and arginine 40 each contribute to the NAD(+) site. Substrate contacts are provided by residues arginine 90 and 122 to 125 (NPCD). Residues 120 to 122 (ATN) and threonine 145 contribute to the NAD(+) site. Residue 150–153 (DTTR) participates in substrate binding. Residue histidine 177 is the Proton acceptor of the active site. Residue threonine 230 participates in substrate binding.

Belongs to the LDH/MDH superfamily. LDH family. As to quaternary structure, homotetramer.

Its subcellular location is the cytoplasm. It carries out the reaction (S)-lactate + NAD(+) = pyruvate + NADH + H(+). It participates in fermentation; pyruvate fermentation to lactate; (S)-lactate from pyruvate: step 1/1. Functionally, catalyzes the conversion of lactate to pyruvate. In Listeria monocytogenes serovar 1/2a (strain ATCC BAA-679 / EGD-e), this protein is L-lactate dehydrogenase 2.